The sequence spans 228 residues: Ephrin-A5b (228 aa).

Positions 1–20 (MLQAEMIVFVGVILWMCVFS) are cleaved as a signal peptide. One can recognise an Ephrin RBD domain in the interval 29 to 162 (ADRYAVFWNR…KLKVFVRPPN (134 aa)). A glycan (N-linked (GlcNAc...) asparagine) is linked at Asn37. Cystine bridges form between Cys62–Cys102 and Cys90–Cys151. Residues 184-198 (LEPRDDTSHEAEPSR) show a composition bias toward basic and acidic residues. A disordered region spans residues 184–205 (LEPRDDTSHEAEPSRSDVSTSG). Ser204 carries the GPI-anchor amidated serine lipid modification. Positions 205-228 (GLRHQTSRPLLALLLLCISLYLLL) are cleaved as a propeptide — removed in mature form.

It belongs to the ephrin family. As to expression, widespread expression in the embryo.

The protein resides in the cell membrane. Functionally, cell surface GPI-bound ligand for Eph receptors, a family of receptor tyrosine kinases which are crucial for migration, repulsion and adhesion during neuronal, vascular and epithelial development. Binds promiscuously Eph receptors residing on adjacent cells, leading to contact-dependent bidirectional signaling into neighboring cells. Induces compartmentalized signaling within a caveolae-like membrane microdomain when bound to the extracellular domain of its cognate receptor. This signaling event requires the activity of the Fyn tyrosine kinase. Activates the epha3 receptor to regulate cell-cell adhesion and cytoskeletal organization. With the receptor epha2 may regulate lens fiber cells shape and interactions and be important for lens transparency maintenance. May function actively to stimulate axon fasciculation. Controls axon growth and may be involved in the creation of the retino-tectal map. The sequence is that of Ephrin-A5b (efna5b) from Danio rerio (Zebrafish).